The primary structure comprises 143 residues: Large ribosomal subunit protein uL11 (143 aa).

Belongs to the universal ribosomal protein uL11 family. As to quaternary structure, part of the ribosomal stalk of the 50S ribosomal subunit. Interacts with L10 and the large rRNA to form the base of the stalk. L10 forms an elongated spine to which L12 dimers bind in a sequential fashion forming a multimeric L10(L12)X complex. Post-translationally, one or more lysine residues are methylated.

Its function is as follows. Forms part of the ribosomal stalk which helps the ribosome interact with GTP-bound translation factors. In Pseudomonas fluorescens (strain Pf0-1), this protein is Large ribosomal subunit protein uL11.